The sequence spans 151 residues: Ribosome maturation factor RimP (151 aa).

The protein belongs to the RimP family.

It localises to the cytoplasm. Its function is as follows. Required for maturation of 30S ribosomal subunits. The sequence is that of Ribosome maturation factor RimP from Nitrosococcus oceani (strain ATCC 19707 / BCRC 17464 / JCM 30415 / NCIMB 11848 / C-107).